Here is a 304-residue protein sequence, read N- to C-terminus: Voltage-dependent anion channel-forming protein YneE (304 aa).

Helical transmembrane passes span 28 to 48, 50 to 70, 194 to 214, and 220 to 240; these read LLLN…YTHL, IKFT…FLGF, VLAG…TLIL, and LFCI…TPFI.

This sequence belongs to the anion channel-forming bestrophin (TC 1.A.46) family.

The protein resides in the cell membrane. The sequence is that of Voltage-dependent anion channel-forming protein YneE (yneE) from Escherichia coli (strain K12).